Here is a 717-residue protein sequence, read N- to C-terminus: F-box only protein 42 (717 aa).

Residues 1–30 are compositionally biased toward acidic residues; it reads MASSSDSEDDSFMAVDQEETVLEGTMDQDE. Residues 1-34 are disordered; sequence MASSSDSEDDSFMAVDQEETVLEGTMDQDEEPHP. Positions 44–93 constitute an F-box domain; it reads NRSMSELPEEVLEYILSFLSPYQEHKTAALVCKQWYRLIKGVAHQCYHGF. 4 Kelch repeats span residues 132 to 184, 186 to 242, 244 to 293, and 295 to 342; these read SMYV…VYKD, LVLF…VIDD, MIVF…VIDD, and TILI…LWCH. The disordered stretch occupies residues 361–474; it reads RAPLSPSLNS…PSTPSAPEGY (114 aa). A compositionally biased stretch (low complexity) spans 363-376; sequence PLSPSLNSRPSPIS. Ser-365 and Ser-373 each carry phosphoserine. The residue at position 378 (Thr-378) is a Phosphothreonine. Polar residues-rich tracts occupy residues 416-426 and 455-469; these read QRQTPSGSREG and SLDSPVQAISPSTPS. Position 552 is a phosphoserine (Ser-552). Over residues 570–596 the composition is skewed to low complexity; that stretch reads GPSASAALSPPLGSSPGSPGSQSLSSG. A disordered region spans residues 570–631; sequence GPSASAALSP…GHHPPQSLNV (62 aa).

In terms of assembly, component of some SCF complex, composed of CUL1, SKP1, RBX1 and FBXO42. Interacts (via the kelch domain) with p53/TP53; interaction is direct.

Its function is as follows. Substrate-recognition component of some SCF (SKP1-CUL1-F-box protein)-type E3 ubiquitin ligase complex. Specifically recognizes p53/TP53, promoting its ubiquitination and degradation. The protein is F-box only protein 42 (FBXO42) of Homo sapiens (Human).